The chain runs to 334 residues: Adenine deaminase (334 aa).

Zn(2+)-binding residues include H14, H16, and H194. Catalysis depends on E197, which acts as the Proton donor. D275 provides a ligand contact to Zn(2+). Residue D276 coordinates substrate.

This sequence belongs to the metallo-dependent hydrolases superfamily. Adenosine and AMP deaminases family. Adenine deaminase type 2 subfamily. The cofactor is Zn(2+).

The enzyme catalyses adenine + H2O + H(+) = hypoxanthine + NH4(+). Catalyzes the hydrolytic deamination of adenine to hypoxanthine. Plays an important role in the purine salvage pathway and in nitrogen catabolism. This Hahella chejuensis (strain KCTC 2396) protein is Adenine deaminase.